The chain runs to 73 residues: Protein WFDC10B (73 aa).

The signal sequence occupies residues 1–21 (MAPQTLLLVLVLCVLLLQAQG). Residues 28–73 (RMQRIKVCEKRPSIDLCIHHCSYFQKCETNKICCSAFCGNICMSIL) enclose the WAP domain.

In terms of tissue distribution, ubiquitously expressed.

Its subcellular location is the secreted. The sequence is that of Protein WFDC10B (WFDC10B) from Homo sapiens (Human).